The sequence spans 226 residues: Membrane protein (226 aa).

The Virion surface portion of the chain corresponds to methionine 1 to valine 11. A helical transmembrane segment spans residues isoleucine 12–valine 32. Topologically, residues leucine 33–serine 41 are intravirion. A helical membrane pass occupies residues valine 42–leucine 62. Residues serine 63–tryptophan 75 lie on the Virion surface side of the membrane. A helical transmembrane segment spans residues valine 76 to phenylalanine 96. The Intravirion segment spans residues valine 97–valine 226. Residues arginine 200 to leucine 216 form an interaction with N protein region.

Belongs to the alphacoronaviruses M protein family. In terms of assembly, homomultimer. Interacts with envelope E protein in the budding compartment of the host cell, which is located between endoplasmic reticulum and the Golgi complex. Forms a complex with HE and S proteins. Interacts with nucleocapsid N protein. This interaction probably participates in RNA packaging into the virus.

It localises to the virion membrane. The protein resides in the host Golgi apparatus membrane. Component of the viral envelope that plays a central role in virus morphogenesis and assembly via its interactions with other viral proteins. This Sus scrofa (Pig) protein is Membrane protein.